A 141-amino-acid chain; its full sequence is Nucleoside diphosphate kinase (141 aa).

Residues Lys9, Phe57, Arg85, Thr91, Arg102, and Asn112 each contribute to the ATP site. His115 serves as the catalytic Pros-phosphohistidine intermediate.

Belongs to the NDK family. In terms of assembly, homotetramer. The cofactor is Mg(2+).

Its subcellular location is the cytoplasm. The catalysed reaction is a 2'-deoxyribonucleoside 5'-diphosphate + ATP = a 2'-deoxyribonucleoside 5'-triphosphate + ADP. The enzyme catalyses a ribonucleoside 5'-diphosphate + ATP = a ribonucleoside 5'-triphosphate + ADP. In terms of biological role, major role in the synthesis of nucleoside triphosphates other than ATP. The ATP gamma phosphate is transferred to the NDP beta phosphate via a ping-pong mechanism, using a phosphorylated active-site intermediate. The sequence is that of Nucleoside diphosphate kinase from Chlamydia caviae (strain ATCC VR-813 / DSM 19441 / 03DC25 / GPIC) (Chlamydophila caviae).